We begin with the raw amino-acid sequence, 351 residues long: Dihydroorotate dehydrogenase (quinone) (351 aa).

Residues 61–65 (AGLDK) and T85 contribute to the FMN site. A substrate-binding site is contributed by K65. Substrate is bound at residue 110–114 (NRMGF). N139 and N172 together coordinate FMN. N172 lines the substrate pocket. The active-site Nucleophile is the S175. Position 177 (N177) interacts with substrate. Residues K217 and T245 each contribute to the FMN site. A substrate-binding site is contributed by 246-247 (NT). FMN-binding positions include G268, G297, and 318 to 319 (YS).

Belongs to the dihydroorotate dehydrogenase family. Type 2 subfamily. In terms of assembly, monomer. FMN is required as a cofactor.

The protein resides in the cell membrane. It catalyses the reaction (S)-dihydroorotate + a quinone = orotate + a quinol. It functions in the pathway pyrimidine metabolism; UMP biosynthesis via de novo pathway; orotate from (S)-dihydroorotate (quinone route): step 1/1. Catalyzes the conversion of dihydroorotate to orotate with quinone as electron acceptor. The protein is Dihydroorotate dehydrogenase (quinone) of Xanthomonas euvesicatoria pv. vesicatoria (strain 85-10) (Xanthomonas campestris pv. vesicatoria).